Consider the following 616-residue polypeptide: Dihydroxy-acid dehydratase (616 aa).

D81 provides a ligand contact to Mg(2+). [2Fe-2S] cluster is bound at residue C122. D123 and K124 together coordinate Mg(2+). K124 bears the N6-carboxylysine mark. Residue C195 coordinates [2Fe-2S] cluster. E491 is a Mg(2+) binding site. S517 functions as the Proton acceptor in the catalytic mechanism.

This sequence belongs to the IlvD/Edd family. As to quaternary structure, homodimer. Requires [2Fe-2S] cluster as cofactor. It depends on Mg(2+) as a cofactor.

The catalysed reaction is (2R)-2,3-dihydroxy-3-methylbutanoate = 3-methyl-2-oxobutanoate + H2O. It catalyses the reaction (2R,3R)-2,3-dihydroxy-3-methylpentanoate = (S)-3-methyl-2-oxopentanoate + H2O. Its pathway is amino-acid biosynthesis; L-isoleucine biosynthesis; L-isoleucine from 2-oxobutanoate: step 3/4. It functions in the pathway amino-acid biosynthesis; L-valine biosynthesis; L-valine from pyruvate: step 3/4. In terms of biological role, functions in the biosynthesis of branched-chain amino acids. Catalyzes the dehydration of (2R,3R)-2,3-dihydroxy-3-methylpentanoate (2,3-dihydroxy-3-methylvalerate) into 2-oxo-3-methylpentanoate (2-oxo-3-methylvalerate) and of (2R)-2,3-dihydroxy-3-methylbutanoate (2,3-dihydroxyisovalerate) into 2-oxo-3-methylbutanoate (2-oxoisovalerate), the penultimate precursor to L-isoleucine and L-valine, respectively. The sequence is that of Dihydroxy-acid dehydratase from Escherichia coli (strain K12 / MC4100 / BW2952).